A 36-amino-acid chain; its full sequence is Mu-agatoxin-Aa1a (36 aa).

Disulfide bonds link cysteine 2–cysteine 17, cysteine 9–cysteine 22, cysteine 16–cysteine 32, and cysteine 24–cysteine 30. An Asparagine amide modification is found at asparagine 36.

This sequence belongs to the neurotoxin 07 (Beta/delta-agtx) family. 04 (aga-5) subfamily. As to expression, expressed by the venom gland.

It localises to the secreted. Functionally, insecticidal neurotoxin that induces an irreversible spastic paralysis when injected into insects. Modifies presynaptic voltage-gated sodium channels (Nav), causing them to open at the normal resting potential of the nerve. This leads to spontaneous release of neurotransmitter and repetitive action potentials in motor neurons. This is Mu-agatoxin-Aa1a from Agelenopsis aperta (North American funnel-web spider).